The primary structure comprises 446 residues: MSSMTPQEIVSELDRHIVGQNGAKRAVAIALRNRWRRQQVDASLRHEITPKNILMIGPTGVGKTEIARRLARLADAPFIKVEATKFTEVGYVGKDVDSIVRDLVEVAVKQTREADMKKVRVRAEDAAEDRILDVLIPPARGASVDTARTGDPAGDSTARQVFRKKLREGQLDDKEIEIDLADARPQFEIMSPAGMEEMTEQLRGMFSQMGQERRRARKLKIAEAMKLLVEEEAAKLVNEEEVKTRALANAEQNGIVFIDEIDKVASRQEAGGADVSRQGVQRDLLPLVEGTTVSTKYGMVKTDHILFIASGAFHLAKPSDLIPELQGRFPIRVELTSLSVQDFEAILTQTHASLVKQYQALLETEGVTLDFTPEGITRLAHIAFEVNERTENIGARRLSTVMERLLDEVSYDATRLSGQTVVVDAGYVNARLQSLSQDEDLSRYIL.

ATP-binding positions include V18, 60–65 (GVGKTE), D259, E324, and R396.

This sequence belongs to the ClpX chaperone family. HslU subfamily. In terms of assembly, a double ring-shaped homohexamer of HslV is capped on each side by a ring-shaped HslU homohexamer. The assembly of the HslU/HslV complex is dependent on binding of ATP.

The protein resides in the cytoplasm. Its function is as follows. ATPase subunit of a proteasome-like degradation complex; this subunit has chaperone activity. The binding of ATP and its subsequent hydrolysis by HslU are essential for unfolding of protein substrates subsequently hydrolyzed by HslV. HslU recognizes the N-terminal part of its protein substrates and unfolds these before they are guided to HslV for hydrolysis. The chain is ATP-dependent protease ATPase subunit HslU from Acidovorax ebreus (strain TPSY) (Diaphorobacter sp. (strain TPSY)).